Here is a 250-residue protein sequence, read N- to C-terminus: Exotoxin type A (250 aa).

The signal sequence occupies residues 1–30; sequence MENNKEVLKKMVFFVLMKFLGLTILPKGIC. C117 and C128 are joined by a disulfide.

It belongs to the staphylococcal/streptococcal toxin family.

In terms of biological role, causative agent of the symptoms associated with scarlet fever, have been associated with streptococcal toxic shock-like disease and may play a role in the early events of rheumatic fever. In Streptococcus pyogenes, this protein is Exotoxin type A (speA).